Consider the following 301-residue polypeptide: Cutinase (301 aa).

An N-terminal signal peptide occupies residues M1–A40. Y100 lines the poly(ethylene terephthalate) pocket. Catalysis depends on S170, which acts as the Nucleophile. Residues M171 and W195 each coordinate poly(ethylene terephthalate). Active-site charge relay system residues include D216 and H248. An intrachain disulfide couples C281 to C299.

This sequence belongs to the AB hydrolase superfamily.

The protein localises to the secreted. The protein resides in the periplasm. The enzyme catalyses a butanoate ester + H2O = an aliphatic alcohol + butanoate + H(+). It carries out the reaction (ethylene terephthalate)(n) + H2O = (ethylene terephthalate)(n-1) + 4-[(2-hydroxyethoxy)carbonyl]benzoate + H(+). It catalyses the reaction cutin + H2O = cutin monomers.. With respect to regulation, activated by magnesium ions. Activated by calcium ions. Inhibited by the serine hydrolase inhibitor phenylmethanesulfonyl fluoride (PMSF). Catalyzes the hydrolysis of cutin, a polyester that forms the structure of plant cuticle. Shows esterase activity towards p-nitrophenol-linked aliphatic esters (pNP-aliphatic esters). Also hydrolyzes the triglyceride triolein. Capable of degrading the plastic poly(ethylene terephthalate) (PET), the most abundant polyester plastic in the world. This Thermobifida fusca (strain YX) protein is Cutinase.